A 431-amino-acid polypeptide reads, in one-letter code: Protein SHQ1 homolog (431 aa).

It belongs to the SHQ1 family.

Its function is as follows. Required for the quantitative accumulation of H/ACA ribonucleoproteins (RNPs). In Caenorhabditis elegans, this protein is Protein SHQ1 homolog.